We begin with the raw amino-acid sequence, 64 residues long: Alpha-conotoxin-like Lp1.8 (64 aa).

The N-terminal stretch at 1 to 21 (MGMRMMFTMFLLVVLTTTVVS) is a signal peptide. A propeptide spanning residues 22–41 (FNSDRESNHENRRTSNQITR) is cleaved from the precursor. Cystine bridges form between C47/C53 and C48/C61. Positions 49–51 (KDP) are lacks the Ser-Xaa-Pro motif that is crucial for potent interaction with nAChR.

Belongs to the conotoxin A superfamily. In terms of tissue distribution, expressed by the venom duct.

The protein localises to the secreted. Its function is as follows. Alpha-conotoxins act on postsynaptic membranes, they bind to the nicotinic acetylcholine receptors (nAChR) and thus inhibit them. Has possibly a distinct nAChR binding mode from other alpha-conotoxins, due to a different three residue motif (Lys-Xaa-Pro instead of the conserved Ser-Xaa-Pro motif). The chain is Alpha-conotoxin-like Lp1.8 from Conus leopardus (Leopard cone).